Here is a 387-residue protein sequence, read N- to C-terminus: Alpha-sarcoglycan (387 aa).

An N-terminal signal peptide occupies residues 1–23 (MAATLTWILLFVGLLAGLRDTKA). The Extracellular segment spans residues 24-290 (QQTTLYPLVG…ATGRDFLADA (267 aa)). N174 and N246 each carry an N-linked (GlcNAc...) asparagine glycan. A helical transmembrane segment spans residues 291-311 (LVTLLVPLLVALLLTLLLAYI). Residues 312–387 (MCCRREGQLK…AQVPLILDQH (76 aa)) lie on the Cytoplasmic side of the membrane. At S377 the chain carries Phosphoserine.

This sequence belongs to the sarcoglycan alpha/epsilon family. In terms of assembly, interacts with the syntrophin SNTA1. Cross-link to form 2 major subcomplexes: one consisting of SGCB, SGCD and SGCG and the other consisting of SGCB and SGCD. The association between SGCB and SGCG is particularly strong while SGCA is loosely associated with the other sarcoglycans. Strongly expressed in skeletal and heart muscle.

The protein localises to the cell membrane. It localises to the sarcolemma. Its subcellular location is the cytoplasm. The protein resides in the cytoskeleton. In terms of biological role, component of the sarcoglycan complex, a subcomplex of the dystrophin-glycoprotein complex which forms a link between the F-actin cytoskeleton and the extracellular matrix. In Mesocricetus auratus (Golden hamster), this protein is Alpha-sarcoglycan (SGCA).